A 527-amino-acid chain; its full sequence is Catalase (527 aa).

Positions M1–Q22 are enriched in basic and acidic residues. Residues M1 to P34 form a disordered region. A2 carries the post-translational modification N-acetylalanine. S9 is subject to Phosphoserine. N6-succinyllysine is present on K13. Residues H75 and N148 contribute to the active site. NADP(+)-binding residues include H194, S201, R203, and N213. The residue at position 221 (K221) is an N6-succinyllysine. An N6-acetyllysine modification is found at K233. The NADP(+) site is built by K237, W303, H305, and K306. K306 carries the N6-acetyllysine; alternate modification. K306 is subject to N6-succinyllysine; alternate. Y358 is a binding site for heme. Phosphoserine is present on residues S417 and S434. Residues K449 and K480 each carry the N6-acetyllysine; alternate modification. K449 and K480 each carry N6-succinyllysine; alternate. A Phosphothreonine modification is found at T511. Position 517 is a phosphoserine (S517). Position 522 is an N6-succinyllysine (K522). The short motif at K524 to L527 is the Microbody targeting signal; atypical element.

Belongs to the catalase family. As to quaternary structure, homotetramer. Interacts (via microbody targeting signal) with PEX5, monomeric form interacts with PEX5, leading to its translocation into peroxisomes. Requires heme as cofactor. The cofactor is NADP(+). In terms of tissue distribution, expressed in renal proximal tubules (at protein level).

The protein localises to the peroxisome matrix. The enzyme catalyses 2 H2O2 = O2 + 2 H2O. Functionally, catalyzes the degradation of hydrogen peroxide (H(2)O(2)) generated by peroxisomal oxidases to water and oxygen, thereby protecting cells from the toxic effects of hydrogen peroxide. Promotes growth of cells including T-cells, B-cells, myeloid leukemia cells, melanoma cells, mastocytoma cells and normal and transformed fibroblast cells. In Rattus norvegicus (Rat), this protein is Catalase (Cat).